A 114-amino-acid polypeptide reads, in one-letter code: Evasin-1 (114 aa).

A signal peptide spans 1–20 (MTFKACIAIITALCAMQVIC). 4 disulfides stabilise this stretch: C32–C53, C49–C90, C66–C95, and C85–C104. N-linked (GlcNAc...) asparagine glycans are attached at residues N39, N54, and N62.

It belongs to the evasin C8 family. In terms of assembly, monomer.

It localises to the secreted. Salivary chemokine-binding protein which shows chemokine neutralizing activity and binds to host chemokines CCL3, CCL4 and CCL18. Binds to CCL3 with 1:1 stoichiometry. The sequence is that of Evasin-1 from Rhipicephalus sanguineus (Brown dog tick).